The following is a 501-amino-acid chain: MKKRALISVFDKDGVLELAKFLRDRDVEIISSGGTYKYLKENNIEVKEISEITDFPEMLDGRVKTLHPLVHAGILAIRDNKEHMKTLEKREINTIDYVVVNLYPFFEKVRENLSFEEKVEFIDIGGPTMLRAAAKNFKDVVVLSDKKDYEKVMNEIKENNCVSFKLRKTLAGKVFNLMSAYDAAISNFLLEGEEEYPEYLSVSYKKIQDLRYGENPHQGAAYYSSTEFDGAMNSFEILNGKALSYNNIKDLDIAWKVACEFEETACCALKHNTPCGVAVGENSKEVYLKAYDADPVSIFGGIVAINRKIDKATAEEMVKIFLEVVAAPDFDEDALEVLRTKKNLRVIKCKNTPQAKNYMVTVDGGILVQGEDNKLANEYKVVTKKEPTEMELRDMIFGMKVVKYVKSNAIVVVKDGVATGIGGGQVNRIWATKEALERGKGGAVLASDAFFPFRDCVDEAAKNGIKAIIQPGGSIRDEESVEACNEHGISMVFTGVRHFKH.

Residues 1–144 (MKKRALISVF…KNFKDVVVLS (144 aa)) form the MGS-like domain.

It belongs to the PurH family.

The enzyme catalyses (6R)-10-formyltetrahydrofolate + 5-amino-1-(5-phospho-beta-D-ribosyl)imidazole-4-carboxamide = 5-formamido-1-(5-phospho-D-ribosyl)imidazole-4-carboxamide + (6S)-5,6,7,8-tetrahydrofolate. It catalyses the reaction IMP + H2O = 5-formamido-1-(5-phospho-D-ribosyl)imidazole-4-carboxamide. It participates in purine metabolism; IMP biosynthesis via de novo pathway; 5-formamido-1-(5-phospho-D-ribosyl)imidazole-4-carboxamide from 5-amino-1-(5-phospho-D-ribosyl)imidazole-4-carboxamide (10-formyl THF route): step 1/1. It functions in the pathway purine metabolism; IMP biosynthesis via de novo pathway; IMP from 5-formamido-1-(5-phospho-D-ribosyl)imidazole-4-carboxamide: step 1/1. This Clostridium perfringens (strain SM101 / Type A) protein is Bifunctional purine biosynthesis protein PurH.